Consider the following 230-residue polypeptide: ATP synthase subunit a (230 aa).

The next 6 helical transmembrane spans lie at 16–36 (LVLF…WLSI), 73–93 (WVSA…LGLL), 106–126 (TYSI…YLAF), 142–162 (LIPF…IALG), 165–185 (LAAN…AIWT), and 192–212 (IASI…GVAC).

Belongs to the ATPase A chain family. In terms of assembly, F-type ATPases have 2 components, CF(1) - the catalytic core - and CF(0) - the membrane proton channel. CF(1) has five subunits: alpha(3), beta(3), gamma(1), delta(1), epsilon(1). CF(0) has three main subunits: a, b and c.

The protein localises to the mitochondrion inner membrane. In terms of biological role, mitochondrial membrane ATP synthase (F(1)F(0) ATP synthase or Complex V) produces ATP from ADP in the presence of a proton gradient across the membrane which is generated by electron transport complexes of the respiratory chain. F-type ATPases consist of two structural domains, F(1) - containing the extramembraneous catalytic core and F(0) - containing the membrane proton channel, linked together by a central stalk and a peripheral stalk. During catalysis, ATP synthesis in the catalytic domain of F(1) is coupled via a rotary mechanism of the central stalk subunits to proton translocation. Key component of the proton channel; it may play a direct role in the translocation of protons across the membrane. The protein is ATP synthase subunit a (ATP6) of Patiria pectinifera (Starfish).